The following is a 347-amino-acid chain: Membrane progestin receptor gamma-B (347 aa).

Residues 1 to 52 lie on the Cytoplasmic side of the membrane; that stretch reads MLSLIKLQRVFNVHQVPKAFHEDGIISGYRHPRSSATECVWSLFQLTNETLN. The helical transmembrane segment at 53–73 threads the bilayer; that stretch reads VWTHFLPTWYFLWKLMTVLLM. Topologically, residues 74–81 are extracellular; that stretch reads EDVWNEAY. A helical membrane pass occupies residues 82 to 102; it reads TWPLLVFLFSCCVYPLASSCA. Residues 103 to 114 are Cytoplasmic-facing; the sequence is HTFSSMSTRARH. The helical transmembrane segment at 115–135 threads the bilayer; that stretch reads ICYFFDYGALSFYSLGSAISY. Residues 136–138 are Extracellular-facing; that stretch reads SAY. Residues 139-159 traverse the membrane as a helical segment; the sequence is VFPDAWLSSSFHAYYISVAVF. Residues 160 to 201 are Cytoplasmic-facing; sequence NTVLSTSLACYSRLGLPLLHYSHDIVERFSERQCPRMSKVLR. The helical transmembrane segment at 202–222 threads the bilayer; sequence ILAFAYPYLFDNIPLFYRLFV. Residues 223–235 lie on the Extracellular side of the membrane; sequence CVGEGCTDNEANS. A helical transmembrane segment spans residues 236–256; that stretch reads VHVQHTLLAFLTSFLFATHLP. At 257–314 the chain is on the cytoplasmic side; that stretch reads ERLAPGRFDYIGHSHQLFHVCAIIGTHFQMKAIEMDMGLRRSQLLASAPAISFNNTIG. A helical transmembrane segment spans residues 315–335; that stretch reads AALLCVSVSLGIICVYSLPLL. The Extracellular segment spans residues 336–347; the sequence is YSSNPKNTANKE.

The protein belongs to the ADIPOR family.

It localises to the membrane. Its function is as follows. Steroid membrane receptor. Binds progesterone. May be involved in oocyte maturation. In Danio rerio (Zebrafish), this protein is Membrane progestin receptor gamma-B.